Here is a 217-residue protein sequence, read N- to C-terminus: Probable glutathione S-transferase DHAR4 (217 aa).

2 residues coordinate glutathione: K8 and D19. 2 residues coordinate L-ascorbate: K8 and D19. Positions 10–85 (ASGAPDVLGD…DLIVGIIEEK (76 aa)) constitute a GST N-terminal domain. The active-site Nucleophile is the C20. The Glutathione-binding motif lies at 20-25 (CPFGQR). Glutathione is bound by residues K47, S75, H164, and W211. In terms of domain architecture, GST C-terminal spans 86 to 217 (YPEPSLVTFP…IASWAPKLDV (132 aa)). Residue K214 coordinates L-ascorbate.

The protein belongs to the GST superfamily. DHAR family. As to quaternary structure, monomer.

The protein localises to the cytoplasm. It localises to the cytosol. The catalysed reaction is RX + glutathione = an S-substituted glutathione + a halide anion + H(+). It catalyses the reaction L-dehydroascorbate + 2 glutathione = glutathione disulfide + L-ascorbate. Exhibits glutathione-dependent thiol transferase and dehydroascorbate (DHA) reductase activities. This is Probable glutathione S-transferase DHAR4 (DHAR4) from Arabidopsis thaliana (Mouse-ear cress).